Here is a 992-residue protein sequence, read N- to C-terminus: MTKRIRQPIIAVLGHVDHGKCLLPDEKVVVPSVGFVTLKELFETASKVVERDDEKEIRELDERITSVNGDGKTGLVKASYVWKVRHKGKVIRVKLKNWHGVTVTPEHPFLTTKGWKRADQLRPGDYVAVPRFIHGNEDEKIFLSYVKVKKSGEEWKEYFYLAGRKGNIDVNLLFVAPKRYVVEFLRGYFEERSEVKGESVIVEARELVEPLSLALLRFGIFSKIQGSKLIVTGKRNLEAFKDYIGFKDEREKALEEAIEKVKGSEVYPIFEEIRRLRLLFGFTREELGSYAKYENSEAPTYEELMEILDFIERGSPSLSKKIAILEGKLKAELRVLEEEGLIKDGKLTPLGRELLEVWRNREFDSKDVDYIRNIAETLVFIPVENVEEEEYDGYVYDLTTETHNFIANGILVHNTTLLDRIRKTNVAAKEAGGITQHIGATEVPIEVVKKIAGPLIKLWKAEIKLPGLLFIDTPGHEAFTSLRARGGSLADLAVLVVDINEGFQPQTIESIEILRKYRTPFVVAANKIDRIKGWVIEEDEPFLMNIKKQDQRAVQELETKLWELIGKFYEFGFQANRFDRVQNFTRELAIVPISAKYGIGIAELLVLIAGLSQRYLEEKLKIEVEGPARGTILEVREEPGLGHTIDVIIYDGTLHKDDTIVVGGKDKAIVTKIRALLKPKPLDEIRDPRFRFDYVDEVTAAAGVKIAAPGLEEALAGSPVIAAPTPEDVEKAKQEILEQIERVVISTDKVGVIVKADTLGSLEALSKELQEKEIPIRKADVGNVSKTDVMEALSVKEEEPKYGVILGFNVKVNEDAEEVAKAKDVKIFVGNVIYKLIEDYEEWVKEEEEKKKRELLSKVTFPGVIRLYPDERYVFRRSNPAIVGIEVIEGRIKPGVTLIKQNGQKVGVIRSIKSRDEFLQEAKKGQAVAIAIEGAIVGRHIHPGETLYVDLSRDDAITLLKHLRDTLEDTDIKALKMIAKVKAKEDPFWRAI.

The DOD-type homing endonuclease domain occupies 96–220; sequence KNWHGVTVTP…LSLALLRFGI (125 aa). The tr-type G domain maps to 399–616; that stretch reads TTETHNFIAN…LIAGLSQRYL (218 aa). Residues 472–476 and 526–529 each bind GTP; these read DTPGH and NKID.

This sequence belongs to the TRAFAC class translation factor GTPase superfamily. Classic translation factor GTPase family. IF-2 subfamily. Post-translationally, this protein undergoes a protein self splicing that involves a post-translational excision of the intervening region (intein) followed by peptide ligation.

Function in general translation initiation by promoting the binding of the formylmethionine-tRNA to ribosomes. Seems to function along with eIF-2. This is Probable translation initiation factor IF-2 (infB) from Pyrococcus abyssi (strain GE5 / Orsay).